The sequence spans 547 residues: Sodium-coupled neutral amino acid transporter 4 (547 aa).

Residues 1-104 are Extracellular-facing; that stretch reads MDPIELRSVN…GLSYAMANTG (104 aa). At Ser49 the chain carries Phosphoserine. The chain crosses the membrane as a helical span at residues 105–125; that stretch reads IVLFVIMLLTVAILSLYSVHL. The Cytoplasmic segment spans residues 126–151; that stretch reads LLKTAKEGGSLIYEKLGEKAFGWPGK. The helical transmembrane segment at 152–172 threads the bilayer; that stretch reads IGAFISITMQNIGAMSSYLFI. Residues 173-195 lie on the Extracellular side of the membrane; it reads IKYELPEVIRVFMGLEENTGEWY. The helical transmembrane segment at 196–216 threads the bilayer; it reads LNGNYLVLFVSVGIILPLSLL. Residues 217–220 are Cytoplasmic-facing; sequence KNLG. Residues 221–241 traverse the membrane as a helical segment; the sequence is YLGYTSGFSLTCMVFFVSVVI. Topologically, residues 242–332 are extracellular; sequence YKKFQIPCPL…PKYFVFNSRT (91 aa). A disulfide bridge links Cys249 with Cys321. 3 N-linked (GlcNAc...) asparagine glycosylation sites follow: Asn260, Asn264, and Asn276. A helical transmembrane segment spans residues 333–353; sequence AYAIPILAFAFVCHPEVLPIY. The Cytoplasmic portion of the chain corresponds to 354–369; the sequence is SELKDRSRRKMQTVSN. The helical transmembrane segment at 370–390 threads the bilayer; the sequence is ISITGMLVMYLLAALFGYLSF. Residues 391–411 are Extracellular-facing; it reads YGEVEDELLHAYSKVYTFDTA. Residues 412 to 432 traverse the membrane as a helical segment; that stretch reads LLMVRLAVLVAVTLTVPIVLF. The Cytoplasmic portion of the chain corresponds to 433 to 453; the sequence is PIRTSVITLLFPRRPFSWVKH. Residues 454–474 traverse the membrane as a helical segment; sequence FGIAAIIIALNNVLVILVPTI. At 475–476 the chain is on the extracellular side; sequence KY. Residues 477-497 traverse the membrane as a helical segment; it reads IFGFIGASSATMLIFILPAAF. Topologically, residues 498–514 are cytoplasmic; that stretch reads YLKLVKKEPLRSPQKIG. The helical transmembrane segment at 515-535 threads the bilayer; it reads ALVFLVTGIIFMMGSMALIII. The Extracellular segment spans residues 536–547; the sequence is DWIYNPPNPDHH.

Belongs to the amino acid/polyamine transporter 2 family. Post-translationally, the disulfide bond plays an important role in substrate transport, but has no effect on trafficking to the cell surface. As to expression, expressed predominantly in liver, and at lower level in skeletal muscle.

The protein localises to the cell membrane. It localises to the cell projection. Its subcellular location is the microvillus membrane. The catalysed reaction is L-alanine(in) + Na(+)(in) = L-alanine(out) + Na(+)(out). It carries out the reaction L-serine(in) + Na(+)(in) = L-serine(out) + Na(+)(out). It catalyses the reaction glycine(in) + Na(+)(in) = glycine(out) + Na(+)(out). The enzyme catalyses L-cysteine(in) + Na(+)(in) = L-cysteine(out) + Na(+)(out). The catalysed reaction is L-asparagine(in) + Na(+)(in) = L-asparagine(out) + Na(+)(out). It carries out the reaction L-threonine(in) + Na(+)(in) = L-threonine(out) + Na(+)(out). It catalyses the reaction L-proline(in) + Na(+)(in) = L-proline(out) + Na(+)(out). The enzyme catalyses L-methionine(in) + Na(+)(in) = L-methionine(out) + Na(+)(out). The catalysed reaction is L-glutamine(in) + Na(+)(in) = L-glutamine(out) + Na(+)(out). It carries out the reaction L-histidine(in) + Na(+)(in) = L-histidine(out) + Na(+)(out). In terms of biological role, symporter that cotransports neutral amino acids and sodium ions from the extraccellular to the intracellular side of the cell membrane. The transport is electrogenic, pH dependent and partially tolerates substitution of Na(+) by Li(+). Preferentially transports smaller amino acids, such as glycine, L-alanine, L-serine, L-asparagine and L-threonine, followed by L-cysteine, L-histidine, L-proline and L-glutamine and L-methionine. This Rattus norvegicus (Rat) protein is Sodium-coupled neutral amino acid transporter 4.